The sequence spans 241 residues: Tubulin-like protein alpha-4B (241 aa).

Basic and acidic residues predominate over residues 1–10 (MRHQQTERQD). The tract at residues 1 to 20 (MRHQQTERQDPSQPLSRQHG) is disordered. GTP is bound at residue D10. D10 is a Mg(2+) binding site. Residues 11–20 (PSQPLSRQHG) are compositionally biased toward polar residues. The GTP site is built by S79, G83, T84, T118, N145, and N167. E193 is an active-site residue.

This sequence belongs to the tubulin family. Mg(2+) is required as a cofactor. Post-translationally, some glutamate residues at the C-terminus are polyglutamylated, resulting in polyglutamate chains on the gamma-carboxyl group. Polyglutamylation plays a key role in microtubule severing by spastin (SPAST). SPAST preferentially recognizes and acts on microtubules decorated with short polyglutamate tails: severing activity by SPAST increases as the number of glutamates per tubulin rises from one to eight, but decreases beyond this glutamylation threshold. Glutamylation is also involved in cilia motility. Some glutamate residues at the C-terminus are monoglycylated but not polyglycylated due to the absence of functional TTLL10 in human. Monoglycylation is mainly limited to tubulin incorporated into cilia and flagella axonemes, which is required for their stability and maintenance. Flagella glycylation controls sperm motility. Both polyglutamylation and monoglycylation can coexist on the same protein on adjacent residues, and lowering glycylation levels increases polyglutamylation, and reciprocally.

The protein resides in the cytoplasm. The protein localises to the cytoskeleton. The enzyme catalyses GTP + H2O = GDP + phosphate + H(+). Tubulin is the major constituent of microtubules, a cylinder consisting of laterally associated linear protofilaments composed ofalpha- and beta-tubulin heterodimers. The polypeptide is Tubulin-like protein alpha-4B (TUBA4B) (Homo sapiens (Human)).